The following is a 334-amino-acid chain: Glycerol-3-phosphate dehydrogenase [NAD(P)+] (334 aa).

Positions 13, 33, and 106 each coordinate NADPH. Positions 106, 137, and 139 each coordinate sn-glycerol 3-phosphate. Ala-141 contacts NADPH. Residues Lys-192, Asp-245, Ser-255, Arg-256, and Asn-257 each contribute to the sn-glycerol 3-phosphate site. Residue Lys-192 is the Proton acceptor of the active site. Position 256 (Arg-256) interacts with NADPH. NADPH is bound by residues Val-280 and Glu-282.

This sequence belongs to the NAD-dependent glycerol-3-phosphate dehydrogenase family.

It is found in the cytoplasm. The enzyme catalyses sn-glycerol 3-phosphate + NAD(+) = dihydroxyacetone phosphate + NADH + H(+). It carries out the reaction sn-glycerol 3-phosphate + NADP(+) = dihydroxyacetone phosphate + NADPH + H(+). It functions in the pathway membrane lipid metabolism; glycerophospholipid metabolism. Functionally, catalyzes the reduction of the glycolytic intermediate dihydroxyacetone phosphate (DHAP) to sn-glycerol 3-phosphate (G3P), the key precursor for phospholipid synthesis. The polypeptide is Glycerol-3-phosphate dehydrogenase [NAD(P)+] (Chlamydia felis (strain Fe/C-56) (Chlamydophila felis)).